Reading from the N-terminus, the 37-residue chain is Large ribosomal subunit protein bL36 (37 aa).

The protein belongs to the bacterial ribosomal protein bL36 family.

This Parasynechococcus marenigrum (strain WH8102) protein is Large ribosomal subunit protein bL36.